Here is a 351-residue protein sequence, read N- to C-terminus: Succinylglutamate desuccinylase (351 aa).

Zn(2+)-binding residues include His73, Glu76, and His168. Glu231 is a catalytic residue.

The protein belongs to the AspA/AstE family. Succinylglutamate desuccinylase subfamily. Zn(2+) serves as cofactor.

The catalysed reaction is N-succinyl-L-glutamate + H2O = L-glutamate + succinate. The protein operates within amino-acid degradation; L-arginine degradation via AST pathway; L-glutamate and succinate from L-arginine: step 5/5. Its function is as follows. Transforms N(2)-succinylglutamate into succinate and glutamate. The sequence is that of Succinylglutamate desuccinylase from Burkholderia lata (strain ATCC 17760 / DSM 23089 / LMG 22485 / NCIMB 9086 / R18194 / 383).